The following is a 422-amino-acid chain: Serine/threonine-protein kinase H1 homolog (422 aa).

Residues 35–80 form a disordered region; the sequence is FIKYDGGGEKTGSPSPQGQSQAVAKVSQSPPPANDQPEPADSHRKK. Positions 46-62 are enriched in polar residues; it reads GSPSPQGQSQAVAKVSQ. In terms of domain architecture, Protein kinase spans 96 to 353; the sequence is YDIKALIGRG…AGQALKHPWI (258 aa). ATP contacts are provided by residues 102–110 and Lys125; that span reads IGRGSFSRV. The active-site Proton acceptor is Asp216. Residues 376-422 are disordered; that stretch reads RASSRCHSTKSSQSTRSSRSTKSSKARRLREKELRELNRRYQQQCNG. A compositionally biased stretch (low complexity) spans 384 to 396; it reads TKSSQSTRSSRST. Residues 405–414 are compositionally biased toward basic and acidic residues; sequence REKELRELNR.

This sequence belongs to the protein kinase superfamily. CAMK Ser/Thr protein kinase family.

The enzyme catalyses L-seryl-[protein] + ATP = O-phospho-L-seryl-[protein] + ADP + H(+). It carries out the reaction L-threonyl-[protein] + ATP = O-phospho-L-threonyl-[protein] + ADP + H(+). The polypeptide is Serine/threonine-protein kinase H1 homolog (pskh1) (Danio rerio (Zebrafish)).